The primary structure comprises 233 residues: Large ribosomal subunit protein uL1 (233 aa).

The protein belongs to the universal ribosomal protein uL1 family. In terms of assembly, part of the 50S ribosomal subunit.

Functionally, binds directly to 23S rRNA. The L1 stalk is quite mobile in the ribosome, and is involved in E site tRNA release. In terms of biological role, protein L1 is also a translational repressor protein, it controls the translation of the L11 operon by binding to its mRNA. In Psychrobacter sp. (strain PRwf-1), this protein is Large ribosomal subunit protein uL1.